The chain runs to 563 residues: Pyruvate decarboxylase isozyme 2 (563 aa).

Residues aspartate 28, histidine 115, tyrosine 157, and arginine 224 each contribute to the pyruvate site. Thiamine diphosphate-binding positions include threonine 390 and 413–415 (GSI). A Mg(2+)-binding site is contributed by aspartate 444. Thiamine diphosphate is bound by residues 445 to 446 (GS) and 471 to 476 (NNGYTI). The Mg(2+) site is built by asparagine 471 and glycine 473. Glutamate 477 contacts pyruvate.

Belongs to the TPP enzyme family. Homotetramer. Mg(2+) is required as a cofactor. Thiamine diphosphate serves as cofactor.

It localises to the cytoplasm. The protein resides in the nucleus. The enzyme catalyses pyruvate + H(+) = acetaldehyde + CO2. It carries out the reaction 3-methyl-2-oxobutanoate + H(+) = 2-methylpropanal + CO2. The catalysed reaction is (S)-3-methyl-2-oxopentanoate + H(+) = 2-methylbutanal + CO2. It catalyses the reaction indole-3-pyruvate + H(+) = indole-3-acetaldehyde + CO2. The enzyme catalyses 3-phenylpyruvate + H(+) = 2-phenylacetaldehyde + CO2. It carries out the reaction 2-oxobutanoate + H(+) = propanal + CO2. The catalysed reaction is 2-oxopentanoate + H(+) = butanal + CO2. It catalyses the reaction 2 acetaldehyde = acetoin. The enzyme catalyses acetaldehyde + pyruvate + H(+) = acetoin + CO2. The protein operates within fermentation; ethanol fermentation. Its pathway is amino-acid degradation; Ehrlich pathway. With respect to regulation, allosterically activated by its substrate, pyruvate. Second most abundant of three pyruvate decarboxylases (PDC1, PDC5, PDC6) implicated in the nonoxidative conversion of pyruvate to acetaldehyde and carbon dioxide during alcoholic fermentation. Most of the produced acetaldehyde is subsequently reduced to ethanol, but some is required for cytosolic acetyl-CoA production for biosynthetic pathways. The enzyme is also one of five 2-oxo acid decarboxylases (PDC1, PDC5, PDC6, ARO10, and THI3) able to decarboxylate more complex 2-oxo acids (alpha-keto-acids) than pyruvate, which seem mainly involved in amino acid catabolism. Here the enzyme catalyzes the decarboxylation of amino acids, which, in a first step, have been transaminated to the corresponding 2-oxo acids. In a third step, the resulting aldehydes are reduced to alcohols, collectively referred to as fusel oils or alcohols. Its preferred substrates are the transaminated amino acids derived from threonine (2-oxobutanoate), norvaline (2-oxopentanoate), valine (3-methyl-2-oxobutanoate, also alpha-keto-isovalerate), isoleucine ((3S)-3-methyl-2-oxopentanoate, also alpha-keto-beta-methylvalerate), phenylalanine (phenylpyruvate), and tryptophan (3-(indol-3-yl)pyruvate), whereas transaminated leucine is no substrate. In a side-reaction the carbanionic intermediate (or active aldehyde) generated by decarboxylation or by activation of an aldehyde can react with an aldehyde via condensation (or carboligation) yielding a 2-hydroxy ketone, collectively called acyloins. The polypeptide is Pyruvate decarboxylase isozyme 2 (PDC5) (Saccharomyces cerevisiae (strain ATCC 204508 / S288c) (Baker's yeast)).